The primary structure comprises 404 residues: Methyltransferase-like protein 22 (404 aa).

Disordered stretches follow at residues 60 to 102 (TDSG…SLQA) and 115 to 145 (QLDE…DKVH). Residues 68–78 (SHRDVHTKEPP) show a composition bias toward basic and acidic residues. The segment covering 79-88 (SAETGSTGSP) has biased composition (low complexity). Phosphoserine is present on Ser-132.

It belongs to the methyltransferase superfamily. METTL22 family. As to quaternary structure, interacts with members of the heat shock protein 90 and 70 families; these proteins probably are methylation substrates.

It localises to the nucleus. The enzyme catalyses L-lysyl-[protein] + 3 S-adenosyl-L-methionine = N(6),N(6),N(6)-trimethyl-L-lysyl-[protein] + 3 S-adenosyl-L-homocysteine + 3 H(+). In terms of biological role, protein N-lysine methyltransferase. Trimethylates KIN at Lys-135 (in vitro). The chain is Methyltransferase-like protein 22 (METTL22) from Homo sapiens (Human).